We begin with the raw amino-acid sequence, 384 residues long: S-adenosylmethionine synthase (384 aa).

Residue histidine 15 coordinates ATP. Aspartate 17 serves as a coordination point for Mg(2+). K(+) is bound at residue glutamate 43. 2 residues coordinate L-methionine: glutamate 56 and glutamine 99. The flexible loop stretch occupies residues 99-109 (QSPDINQGVDR). Residues 164–166 (DAK), 230–231 (RF), aspartate 239, 245–246 (RK), alanine 262, and lysine 266 each bind ATP. Aspartate 239 lines the L-methionine pocket. Position 270 (lysine 270) interacts with L-methionine.

This sequence belongs to the AdoMet synthase family. As to quaternary structure, homotetramer; dimer of dimers. Mg(2+) serves as cofactor. K(+) is required as a cofactor.

It localises to the cytoplasm. The catalysed reaction is L-methionine + ATP + H2O = S-adenosyl-L-methionine + phosphate + diphosphate. It functions in the pathway amino-acid biosynthesis; S-adenosyl-L-methionine biosynthesis; S-adenosyl-L-methionine from L-methionine: step 1/1. Catalyzes the formation of S-adenosylmethionine (AdoMet) from methionine and ATP. The overall synthetic reaction is composed of two sequential steps, AdoMet formation and the subsequent tripolyphosphate hydrolysis which occurs prior to release of AdoMet from the enzyme. The chain is S-adenosylmethionine synthase from Escherichia coli (strain K12 / DH10B).